The primary structure comprises 186 residues: Ribosome-recycling factor (186 aa).

It belongs to the RRF family.

The protein resides in the cytoplasm. In terms of biological role, responsible for the release of ribosomes from messenger RNA at the termination of protein biosynthesis. May increase the efficiency of translation by recycling ribosomes from one round of translation to another. This is Ribosome-recycling factor from Bacteroides thetaiotaomicron (strain ATCC 29148 / DSM 2079 / JCM 5827 / CCUG 10774 / NCTC 10582 / VPI-5482 / E50).